The following is a 94-amino-acid chain: Small ribosomal subunit protein uS19m (94 aa).

Belongs to the universal ribosomal protein uS19 family.

The protein resides in the mitochondrion. This chain is Small ribosomal subunit protein uS19m (RPS19), found in Petunia hybrida (Petunia).